The following is a 102-amino-acid chain: Large ribosomal subunit protein bL21 (102 aa).

Belongs to the bacterial ribosomal protein bL21 family. As to quaternary structure, part of the 50S ribosomal subunit. Contacts protein L20.

In terms of biological role, this protein binds to 23S rRNA in the presence of protein L20. The sequence is that of Large ribosomal subunit protein bL21 from Lachnoclostridium phytofermentans (strain ATCC 700394 / DSM 18823 / ISDg) (Clostridium phytofermentans).